We begin with the raw amino-acid sequence, 57 residues long: Large ribosomal subunit protein bL32 (57 aa).

Over residues 1–19 (MAVPKRRMSRSNTRSRRSQ) the composition is skewed to basic residues. The interval 1–21 (MAVPKRRMSRSNTRSRRSQWK) is disordered.

It belongs to the bacterial ribosomal protein bL32 family.

The chain is Large ribosomal subunit protein bL32 from Mycobacteroides abscessus (strain ATCC 19977 / DSM 44196 / CCUG 20993 / CIP 104536 / JCM 13569 / NCTC 13031 / TMC 1543 / L948) (Mycobacterium abscessus).